A 173-amino-acid chain; its full sequence is MDPVEEVLNNPATRAYIHRLIGDEGINLLERFPKDGEHSDEDLAASTGINLNSVRHTLYTLYEKRLAEYHRIKNNETGWLTYLWQLRIDLLYDAIREDMETVLSKLERRARFEEENDFYICKDCHDIYTFTVAMGGNFTCPNCGQPLSHFENETLAKALRARIEIMKKTLGHA.

One can recognise an HTH TFE/IIEalpha-type domain in the interval 9–92 (NNPATRAYIH…LWQLRIDLLY (84 aa)).

The protein belongs to the TFE family. Monomer. Interaction with RNA polymerase subunits RpoF and RpoE is necessary for Tfe stimulatory transcription activity. Able to interact with Tbp and RNA polymerase in the absence of DNA promoter. Interacts both with the preinitiation and elongation complexes.

Its function is as follows. Transcription factor that plays a role in the activation of archaeal genes transcribed by RNA polymerase. Facilitates transcription initiation by enhancing TATA-box recognition by TATA-box-binding protein (Tbp), and transcription factor B (Tfb) and RNA polymerase recruitment. Not absolutely required for transcription in vitro, but particularly important in cases where Tbp or Tfb function is not optimal. It dynamically alters the nucleic acid-binding properties of RNA polymerases by stabilizing the initiation complex and destabilizing elongation complexes. Seems to translocate with the RNA polymerase following initiation and acts by binding to the non template strand of the transcription bubble in elongation complexes. In Methanoregula boonei (strain DSM 21154 / JCM 14090 / 6A8), this protein is Transcription factor E.